A 279-amino-acid chain; its full sequence is MAFQGTSRTLTQQSSAATSDELQKILFSPDAIKKMATECDLGRHHWMRADNAISVRPLVPEVTHGSIASFFKSGYDAGELRSKGYMSVPQVLCAVTRTVSTDAEGSLRIYLADLGDKELSPIDGQCVSLHNHDLPALVSFQPTYDCPMETIGNRKRCFAVVIERHGYIGYTGTTASVCSNWQARFSSKNNNYTHIAAGKTLVLPFNRLAEQTKPSAVARLLKSQLNNIESSQYVLSKAKINQNARSESEELNVESPSFAIGSSSASRSEAFRPQVVNGL.

The protein belongs to the cucumovirus movement protein family.

The protein localises to the host cell junction. Its subcellular location is the host plasmodesma. In terms of biological role, transports viral genome to neighboring plant cells directly through plasmosdesmata, without any budding. The movement protein allows efficient cell to cell propagation, by bypassing the host cell wall barrier. Acts by forming a tubular structure at the host plasmodesmata, enlarging it enough to allow free passage of virion capsids. This Cucumber mosaic virus (strain C7-2) (CMV) protein is Movement protein.